Consider the following 150-residue polypeptide: Ribonuclease K6 (150 aa).

The signal sequence occupies residues 1 to 23 (MVLCFPLLLLLLVLWGPVCPLHA). Catalysis depends on His-38, which acts as the Proton acceptor. 4 cysteine pairs are disulfide-bonded: Cys-46–Cys-104, Cys-60–Cys-114, Cys-78–Cys-129, and Cys-85–Cys-92. Residues 61-65 (KHQNT) and Lys-86 each bind substrate. The N-linked (GlcNAc...) asparagine glycan is linked to Asn-100. Arg-105 serves as a coordination point for substrate. His-145 functions as the Proton donor in the catalytic mechanism.

It belongs to the pancreatic ribonuclease family. As to quaternary structure, interacts (via N-terminus) with bacterial lipopolysaccharide (LPS).

The protein localises to the secreted. It is found in the lysosome. The protein resides in the cytoplasmic granule. In terms of biological role, ribonuclease which shows a preference for the pyrimidines uridine and cytosine. Has potent antibacterial activity against a range of Gram-positive and Gram-negative bacteria, including P.aeruginosa, A.baumanii, M.luteus, S.aureus, E.faecalis, E.faecium, S.saprophyticus and E.coli. Causes loss of bacterial membrane integrity, and also promotes agglutination of Gram-negative bacteria. Probably contributes to urinary tract sterility. Bactericidal activity is independent of RNase activity. In Pan troglodytes (Chimpanzee), this protein is Ribonuclease K6 (RNASE6).